Consider the following 277-residue polypeptide: Phosphatidylglycerol--prolipoprotein diacylglyceryl transferase (277 aa).

4 helical membrane passes run 22–42 (ISIRYYGLLWAIGIFFAYIVV), 59–79 (LFFYCFFGILIGARLGHCLFY), 107–127 (GYEGLASHGGTLGLIISLWLY), and 133–153 (MNYMDVVDMIAVATPITACFI). R154 contacts a 1,2-diacyl-sn-glycero-3-phospho-(1'-sn-glycerol). Helical transmembrane passes span 186-206 (PAQLYEAIAYFILFLVMMFLY), 216-236 (GFFFGLCLTAIFTFRFFVEFL), and 251-271 (MGQWLSIPFVIIGIYFMFFYG).

The protein belongs to the Lgt family.

It is found in the cell inner membrane. The enzyme catalyses L-cysteinyl-[prolipoprotein] + a 1,2-diacyl-sn-glycero-3-phospho-(1'-sn-glycerol) = an S-1,2-diacyl-sn-glyceryl-L-cysteinyl-[prolipoprotein] + sn-glycerol 1-phosphate + H(+). It functions in the pathway protein modification; lipoprotein biosynthesis (diacylglyceryl transfer). In terms of biological role, catalyzes the transfer of the diacylglyceryl group from phosphatidylglycerol to the sulfhydryl group of the N-terminal cysteine of a prolipoprotein, the first step in the formation of mature lipoproteins. The sequence is that of Phosphatidylglycerol--prolipoprotein diacylglyceryl transferase from Bacteroides fragilis (strain ATCC 25285 / DSM 2151 / CCUG 4856 / JCM 11019 / LMG 10263 / NCTC 9343 / Onslow / VPI 2553 / EN-2).